We begin with the raw amino-acid sequence, 235 residues long: 7-cyano-7-deazaguanine synthase (235 aa).

16–26 contacts ATP; it reads FSGGQDSTTCL. The Zn(2+) site is built by Cys193, Cys201, Cys204, and Cys207.

Belongs to the QueC family. The cofactor is Zn(2+).

The catalysed reaction is 7-carboxy-7-deazaguanine + NH4(+) + ATP = 7-cyano-7-deazaguanine + ADP + phosphate + H2O + H(+). It functions in the pathway purine metabolism; 7-cyano-7-deazaguanine biosynthesis. In terms of biological role, catalyzes the ATP-dependent conversion of 7-carboxy-7-deazaguanine (CDG) to 7-cyano-7-deazaguanine (preQ(0)). This is 7-cyano-7-deazaguanine synthase from Actinobacillus succinogenes (strain ATCC 55618 / DSM 22257 / CCUG 43843 / 130Z).